Consider the following 96-residue polypeptide: Putative defensin-like protein 263 (96 aa).

An N-terminal signal peptide occupies residues 1 to 26; it reads MEKTSLKLVFLFSLTVIALCLSLSAA. 4 disulfides stabilise this stretch: cysteine 48–cysteine 96, cysteine 67–cysteine 86, cysteine 73–cysteine 91, and cysteine 77–cysteine 93.

It belongs to the DEFL family.

It localises to the secreted. The chain is Putative defensin-like protein 263 from Arabidopsis thaliana (Mouse-ear cress).